Here is a 289-residue protein sequence, read N- to C-terminus: Shikimate dehydrogenase (NADP(+)) (289 aa).

Residues 22-24 and Thr69 each bind shikimate; that span reads SRS. Lys73 serves as the catalytic Proton acceptor. Glu85 provides a ligand contact to NADP(+). Shikimate-binding residues include Asn94 and Asp109. NADP(+) is bound by residues 134–138, 158–163, and Ile226; these read GAGGA and NRTLSR. Tyr228 lines the shikimate pocket. Gly249 provides a ligand contact to NADP(+).

This sequence belongs to the shikimate dehydrogenase family. In terms of assembly, homodimer.

The catalysed reaction is shikimate + NADP(+) = 3-dehydroshikimate + NADPH + H(+). It functions in the pathway metabolic intermediate biosynthesis; chorismate biosynthesis; chorismate from D-erythrose 4-phosphate and phosphoenolpyruvate: step 4/7. Involved in the biosynthesis of the chorismate, which leads to the biosynthesis of aromatic amino acids. Catalyzes the reversible NADPH linked reduction of 3-dehydroshikimate (DHSA) to yield shikimate (SA). This Brucella melitensis biotype 2 (strain ATCC 23457) protein is Shikimate dehydrogenase (NADP(+)).